An 89-amino-acid polypeptide reads, in one-letter code: Small ribosomal subunit protein uS19 (89 aa).

It belongs to the universal ribosomal protein uS19 family.

In terms of biological role, protein S19 forms a complex with S13 that binds strongly to the 16S ribosomal RNA. The polypeptide is Small ribosomal subunit protein uS19 (Xylella fastidiosa (strain M23)).